A 741-amino-acid polypeptide reads, in one-letter code: Photosystem I P700 chlorophyll a apoprotein A2 1 (741 aa).

8 helical membrane-spanning segments follow: residues 46-69, 135-158, 175-199, 273-291, 334-357, 373-399, 421-443, and 524-542; these read IFAT…FHVA, LYTG…LHLQ, LNHH…HVAI, MAHH…GHMY, LHFQ…QHMY, AALY…IFLV, AIIS…LYVH, and FLVH…LILV. [4Fe-4S] cluster contacts are provided by Cys566 and Cys575. 2 helical membrane-spanning segments follow: residues 582 to 603 and 650 to 672; these read SFYL…YWHW and LSVW…MFLI. Positions 661, 669, and 677 each coordinate chlorophyll a. Residue Trp678 coordinates phylloquinone. A helical transmembrane segment spans residues 714 to 734; that stretch reads VVGLAHFTVGYVLTYAAFLIA.

Belongs to the PsaA/PsaB family. The PsaA/B heterodimer binds the P700 chlorophyll special pair and subsequent electron acceptors. PSI consists of a core antenna complex that captures photons, and an electron transfer chain that converts photonic excitation into a charge separation. The cyanobacterial PSI reaction center is composed of one copy each of PsaA,B,C,D,E,F,I,J,K,L,M and X, and forms trimeric complexes. It depends on PSI electron transfer chain: 5 chlorophyll a, 1 chlorophyll a', 2 phylloquinones and 3 4Fe-4S clusters. PSI core antenna: 90 chlorophyll a, 22 carotenoids, 3 phospholipids and 1 galactolipid. P700 is a chlorophyll a/chlorophyll a' dimer, A0 is one or more chlorophyll a, A1 is one or both phylloquinones and FX is a shared 4Fe-4S iron-sulfur center. as a cofactor.

The protein resides in the cellular thylakoid membrane. The catalysed reaction is reduced [plastocyanin] + hnu + oxidized [2Fe-2S]-[ferredoxin] = oxidized [plastocyanin] + reduced [2Fe-2S]-[ferredoxin]. PsaA and PsaB bind P700, the primary electron donor of photosystem I (PSI), as well as the electron acceptors A0, A1 and FX. PSI is a plastocyanin/cytochrome c6-ferredoxin oxidoreductase, converting photonic excitation into a charge separation, which transfers an electron from the donor P700 chlorophyll pair to the spectroscopically characterized acceptors A0, A1, FX, FA and FB in turn. Oxidized P700 is reduced on the lumenal side of the thylakoid membrane by plastocyanin or cytochrome c6. The protein is Photosystem I P700 chlorophyll a apoprotein A2 1 (psaB1) of Nostoc sp. (strain PCC 7120 / SAG 25.82 / UTEX 2576).